We begin with the raw amino-acid sequence, 333 residues long: Viral cathepsin (333 aa).

A signal peptide spans 1-20 (MTKLLNFVILASVLTVTAHA). Positions 21-124 (LTYDLNNSDE…VIKDEPQALL (104 aa)) are cleaved as a propeptide — activation peptide. 3 disulfide bridges follow: Cys-145-Cys-186, Cys-179-Cys-219, and Cys-272-Cys-321. The active site involves Cys-148. Residue Asn-170 is glycosylated (N-linked (GlcNAc...) asparagine; by host). Catalysis depends on residues His-280 and Asn-300.

Belongs to the peptidase C1 family. Post-translationally, synthesized as an inactive proenzyme and activated by proteolytic removal of the inhibitory propeptide.

It carries out the reaction Endopeptidase of broad specificity, hydrolyzing substrates of both cathepsin L and cathepsin B.. Its function is as follows. Cysteine protease that plays an essential role in host liquefaction to facilitate horizontal transmission of the virus. May participate in the degradation of foreign protein expressed by the baculovirus system. The chain is Viral cathepsin (VCATH) from Cydia pomonella granulosis virus (isolate Mexico/1963) (CpGV).